Consider the following 511-residue polypeptide: Lysine--tRNA ligase (511 aa).

Positions 1–21 are disordered; that stretch reads MHTEKDPNKNTPEQQTPISLN. The span at 9-21 shows a compositional bias: polar residues; that stretch reads KNTPEQQTPISLN. 2 residues coordinate Mg(2+): Glu422 and Glu429.

Belongs to the class-II aminoacyl-tRNA synthetase family. Homodimer. Mg(2+) serves as cofactor.

It localises to the cytoplasm. The enzyme catalyses tRNA(Lys) + L-lysine + ATP = L-lysyl-tRNA(Lys) + AMP + diphosphate. The protein is Lysine--tRNA ligase of Pelodictyon phaeoclathratiforme (strain DSM 5477 / BU-1).